A 213-amino-acid polypeptide reads, in one-letter code: Large ribosomal subunit protein uL1 (213 aa).

The protein belongs to the universal ribosomal protein uL1 family. In terms of assembly, part of the 50S ribosomal subunit.

In terms of biological role, binds directly to 23S rRNA. Probably involved in E site tRNA release. Its function is as follows. Protein L1 is also a translational repressor protein, it controls the translation of its operon by binding to its mRNA. The protein is Large ribosomal subunit protein uL1 of Methanococcus maripaludis (strain C5 / ATCC BAA-1333).